We begin with the raw amino-acid sequence, 576 residues long: Sulfite reductase [NADPH] hemoprotein beta-component (576 aa).

Residues 1–12 (MNVKTEPDRSRD) are compositionally biased toward basic and acidic residues. Residues 1–25 (MNVKTEPDRSRDVSQPLDKLGPDET) are disordered. Residues cysteine 441, cysteine 447, cysteine 486, and cysteine 490 each coordinate [4Fe-4S] cluster. Cysteine 490 lines the siroheme pocket.

It belongs to the nitrite and sulfite reductase 4Fe-4S domain family. Alpha(8)-beta(8). The alpha component is a flavoprotein, the beta component is a hemoprotein. It depends on siroheme as a cofactor. [4Fe-4S] cluster serves as cofactor.

It carries out the reaction hydrogen sulfide + 3 NADP(+) + 3 H2O = sulfite + 3 NADPH + 4 H(+). It functions in the pathway sulfur metabolism; hydrogen sulfide biosynthesis; hydrogen sulfide from sulfite (NADPH route): step 1/1. In terms of biological role, component of the sulfite reductase complex that catalyzes the 6-electron reduction of sulfite to sulfide. This is one of several activities required for the biosynthesis of L-cysteine from sulfate. The chain is Sulfite reductase [NADPH] hemoprotein beta-component from Nitrobacter hamburgensis (strain DSM 10229 / NCIMB 13809 / X14).